The following is a 495-amino-acid chain: Trigger factor (495 aa).

The 82-residue stretch at 162-243 folds into the PPIase FKBP-type domain; that stretch reads DDFVSIDLSA…VKSLKERELP (82 aa). The segment covering 425 to 437 has biased composition (basic and acidic residues); the sequence is DTDGNEIDPKEYF. The segment at 425–495 is disordered; sequence DTDGNEIDPK…TDDDSENAEK (71 aa). The segment covering 450-461 has biased composition (low complexity); that stretch reads SADAEASENSEA. Acidic residues predominate over residues 486–495; the sequence is TDDDSENAEK.

It belongs to the FKBP-type PPIase family. Tig subfamily.

It localises to the cytoplasm. The catalysed reaction is [protein]-peptidylproline (omega=180) = [protein]-peptidylproline (omega=0). In terms of biological role, involved in protein export. Acts as a chaperone by maintaining the newly synthesized protein in an open conformation. Functions as a peptidyl-prolyl cis-trans isomerase. This is Trigger factor from Corynebacterium kroppenstedtii (strain DSM 44385 / JCM 11950 / CIP 105744 / CCUG 35717).